Here is a 477-residue protein sequence, read N- to C-terminus: Cyclin-A1-2 (477 aa).

It belongs to the cyclin family. Cyclin AB subfamily.

The protein is Cyclin-A1-2 (CYCA1-2) of Oryza sativa subsp. japonica (Rice).